A 491-amino-acid polypeptide reads, in one-letter code: Glutamyl-tRNA(Gln) amidotransferase subunit A (491 aa).

Active-site charge relay system residues include Lys-76 and Ser-154. Ser-178 functions as the Acyl-ester intermediate in the catalytic mechanism.

Belongs to the amidase family. GatA subfamily. In terms of assembly, heterotrimer of A, B and C subunits.

The catalysed reaction is L-glutamyl-tRNA(Gln) + L-glutamine + ATP + H2O = L-glutaminyl-tRNA(Gln) + L-glutamate + ADP + phosphate + H(+). Its function is as follows. Allows the formation of correctly charged Gln-tRNA(Gln) through the transamidation of misacylated Glu-tRNA(Gln) in organisms which lack glutaminyl-tRNA synthetase. The reaction takes place in the presence of glutamine and ATP through an activated gamma-phospho-Glu-tRNA(Gln). The chain is Glutamyl-tRNA(Gln) amidotransferase subunit A from Cereibacter sphaeroides (strain ATCC 17029 / ATH 2.4.9) (Rhodobacter sphaeroides).